The following is a 549-amino-acid chain: Glucose-6-phosphate isomerase (549 aa).

Glu-353 (proton donor) is an active-site residue. Active-site residues include His-384 and Lys-513.

This sequence belongs to the GPI family.

Its subcellular location is the cytoplasm. The catalysed reaction is alpha-D-glucose 6-phosphate = beta-D-fructose 6-phosphate. It functions in the pathway carbohydrate biosynthesis; gluconeogenesis. Its pathway is carbohydrate degradation; glycolysis; D-glyceraldehyde 3-phosphate and glycerone phosphate from D-glucose: step 2/4. In terms of biological role, catalyzes the reversible isomerization of glucose-6-phosphate to fructose-6-phosphate. The polypeptide is Glucose-6-phosphate isomerase (Brucella canis (strain ATCC 23365 / NCTC 10854 / RM-666)).